The primary structure comprises 323 residues: Ribosomal RNA small subunit methyltransferase H (323 aa).

Residues 39-41 (GGY), D57, F84, D103, and Q110 contribute to the S-adenosyl-L-methionine site.

This sequence belongs to the methyltransferase superfamily. RsmH family.

Its subcellular location is the cytoplasm. It carries out the reaction cytidine(1402) in 16S rRNA + S-adenosyl-L-methionine = N(4)-methylcytidine(1402) in 16S rRNA + S-adenosyl-L-homocysteine + H(+). Functionally, specifically methylates the N4 position of cytidine in position 1402 (C1402) of 16S rRNA. This is Ribosomal RNA small subunit methyltransferase H from Gluconobacter oxydans (strain 621H) (Gluconobacter suboxydans).